Consider the following 224-residue polypeptide: ATP-dependent dethiobiotin synthetase BioD (224 aa).

Mg(2+) is bound at residue Thr18. Lys39 is a catalytic residue. Ser43 serves as a coordination point for substrate. Asp56 and Glu117 together coordinate Mg(2+). Residues Asp56, 117–120, and 177–178 each bind ATP; these read EGVG and NE.

It belongs to the dethiobiotin synthetase family. Homodimer. It depends on Mg(2+) as a cofactor.

It is found in the cytoplasm. The catalysed reaction is (7R,8S)-7,8-diammoniononanoate + CO2 + ATP = (4R,5S)-dethiobiotin + ADP + phosphate + 3 H(+). The protein operates within cofactor biosynthesis; biotin biosynthesis; biotin from 7,8-diaminononanoate: step 1/2. Its function is as follows. Catalyzes a mechanistically unusual reaction, the ATP-dependent insertion of CO2 between the N7 and N8 nitrogen atoms of 7,8-diaminopelargonic acid (DAPA, also called 7,8-diammoniononanoate) to form a ureido ring. The protein is ATP-dependent dethiobiotin synthetase BioD of Xanthomonas axonopodis pv. citri (strain 306).